Here is a 547-residue protein sequence, read N- to C-terminus: Probable FMN/FAD exporter YeeO (547 aa).

A run of 11 helical transmembrane segments spans residues 94–114 (ITPLAVPIFMENACVLLMGVL), 139–159 (VIMAFFAAIDLGTTVVVAFSL), 174–194 (SLVIMTLFAVLLATLIHHFGE), 211–231 (LALTYLELTVLSYPAAAITLI), 246–268 (LLINGSLNILNIIISGILIYGLF), 281–301 (GLTISRYIGAVAILWVLAIGF), 318–338 (FSIIWEVMGIGIPASVESVLF), 350–370 (AGMGTSVIAGNFIAFSIAALI), 404–424 (VFWLSTLGLTAIAWLTAPFAG), 439–459 (VVVILIWLNALFMPIWSASWV), and 486–506 (VVVGYVLGIMLGWGVVGVWMG).

The protein belongs to the multi antimicrobial extrusion (MATE) (TC 2.A.66.1) family.

Its subcellular location is the cell inner membrane. Its function is as follows. A transporter able to export peptides and flavins. When overexpressed allows cells deleted for multiple peptidases (pepA, pepB, pepD and pepN) to grow in the presence of dipeptides Ala-Gln or Gly-Tyr which otherwise inhibit growth. Cells overexpressing this protein have decreased intracellular levels of Ala-Gln dipeptide, and in a system that produces the Ala-Gln dipeptide, overproduction of this protein increases its export. When overexpressed increases secretion of FMN and FAD but not riboflavin; intracellular concentrations of FMN and riboflavin rise, possibly to compensate for increased secretion. Increased overexpression causes slight cell elongation. This is Probable FMN/FAD exporter YeeO (yeeO) from Escherichia coli (strain K12).